A 175-amino-acid chain; its full sequence is Translation initiation factor IF-3 (175 aa).

The protein belongs to the IF-3 family. Monomer.

It is found in the cytoplasm. Functionally, IF-3 binds to the 30S ribosomal subunit and shifts the equilibrium between 70S ribosomes and their 50S and 30S subunits in favor of the free subunits, thus enhancing the availability of 30S subunits on which protein synthesis initiation begins. The protein is Translation initiation factor IF-3 of Staphylococcus saprophyticus subsp. saprophyticus (strain ATCC 15305 / DSM 20229 / NCIMB 8711 / NCTC 7292 / S-41).